The primary structure comprises 501 residues: Na(+)/H(+) antiporter NhaB (501 aa).

11 helical membrane passes run 24–44 (VILLFLVINPIVMYLLGPGVA), 46–66 (WLLIGEFIFTLAMALKCYPLL), 90–110 (VLTNFPVILLLMFMVAGIYFM), 145–165 (FLDALTVTAVIISVAVGFFSV), 206–226 (LLMHGAIGTALGGVATMVGEP), 239–259 (FAGFFLHMAPVSIPVLFAGLA), 302–319 (ALWIQAVAAVILVFGLAF), 351–371 (FQESLPFTSLLVVFFAVVAVI), 395–415 (MFFIANGLLSMISDNVFVATV), 450–470 (VATPNGQAAFLFLLTSAIAPL), and 478–498 (MVIMALPYTIVMGGVGLYMVT).

Belongs to the NhaB Na(+)/H(+) (TC 2.A.34) antiporter family.

Its subcellular location is the cell inner membrane. The enzyme catalyses 2 Na(+)(in) + 3 H(+)(out) = 2 Na(+)(out) + 3 H(+)(in). In terms of biological role, na(+)/H(+) antiporter that extrudes sodium in exchange for external protons. The chain is Na(+)/H(+) antiporter NhaB from Marinobacter nauticus (strain ATCC 700491 / DSM 11845 / VT8) (Marinobacter aquaeolei).